A 735-amino-acid polypeptide reads, in one-letter code: Catalase-peroxidase (735 aa).

The tryptophyl-tyrosyl-methioninium (Trp-Tyr) (with M-249) cross-link spans tryptophan 95 to tyrosine 223. The active-site Proton acceptor is the histidine 96. Positions tyrosine 223–methionine 249 form a cross-link, tryptophyl-tyrosyl-methioninium (Tyr-Met) (with W-95). Histidine 264 provides a ligand contact to heme b.

The protein belongs to the peroxidase family. Peroxidase/catalase subfamily. Homodimer or homotetramer. Heme b is required as a cofactor. Formation of the three residue Trp-Tyr-Met cross-link is important for the catalase, but not the peroxidase activity of the enzyme.

It carries out the reaction H2O2 + AH2 = A + 2 H2O. The catalysed reaction is 2 H2O2 = O2 + 2 H2O. Its function is as follows. Bifunctional enzyme with both catalase and broad-spectrum peroxidase activity. This is Catalase-peroxidase from Aliarcobacter butzleri (strain RM4018) (Arcobacter butzleri).